Here is a 538-residue protein sequence, read N- to C-terminus: Putative outer membrane porin BglH (538 aa).

Residues 1–25 (MFRRNLITSAILLMAPLAFSAQSLA) form the signal peptide. The interval 52-82 (KDEEKKKYTPATVNRSVSTNDQGYAANPFPT) is disordered. Positions 62–73 (ATVNRSVSTNDQ) are enriched in polar residues.

It belongs to the porin LamB (TC 1.B.3) family.

It localises to the cell outer membrane. Its function is as follows. May be a sugar porin with a broad carbohydrate specificity. In Shigella sonnei (strain Ss046), this protein is Putative outer membrane porin BglH (bglH).